Here is a 280-residue protein sequence, read N- to C-terminus: 2,3,4,5-tetrahydropyridine-2,6-dicarboxylate N-succinyltransferase (280 aa).

Residues arginine 109 and aspartate 146 each contribute to the substrate site.

The protein belongs to the transferase hexapeptide repeat family. As to quaternary structure, homotrimer.

It is found in the cytoplasm. The catalysed reaction is (S)-2,3,4,5-tetrahydrodipicolinate + succinyl-CoA + H2O = (S)-2-succinylamino-6-oxoheptanedioate + CoA. The protein operates within amino-acid biosynthesis; L-lysine biosynthesis via DAP pathway; LL-2,6-diaminopimelate from (S)-tetrahydrodipicolinate (succinylase route): step 1/3. The protein is 2,3,4,5-tetrahydropyridine-2,6-dicarboxylate N-succinyltransferase of Blochmanniella floridana.